A 423-amino-acid polypeptide reads, in one-letter code: D-tagatose-1,6-bisphosphate aldolase subunit GatZ (423 aa).

The protein belongs to the GatZ/KbaZ family. GatZ subfamily. In terms of assembly, forms a complex with GatY.

The protein operates within carbohydrate metabolism; D-tagatose 6-phosphate degradation; D-glyceraldehyde 3-phosphate and glycerone phosphate from D-tagatose 6-phosphate: step 2/2. Functionally, component of the tagatose-1,6-bisphosphate aldolase GatYZ that is required for full activity and stability of the Y subunit. Could have a chaperone-like function for the proper and stable folding of GatY. When expressed alone, GatZ does not show any aldolase activity. Is involved in the catabolism of galactitol. In Salmonella heidelberg (strain SL476), this protein is D-tagatose-1,6-bisphosphate aldolase subunit GatZ.